The primary structure comprises 602 residues: mRNA-decapping enzyme 1A (602 aa).

Serine 82 carries the phosphoserine modification. The span at 152 to 161 (RSQQAARDKQ) shows a compositional bias: basic and acidic residues. 3 disordered regions span residues 152-174 (RSQQ…DQRP), 191-234 (NQMG…PSGH), and 267-291 (GDAS…APQS). Phosphoserine occurs at positions 162, 199, and 200. Polar residues predominate over residues 193–229 (MGGSNISSPGLQPSTQLSNLGSTETLEETPSGSQDKS). A phosphoserine mark is found at serine 335 and serine 339. Residue threonine 367 is modified to Phosphothreonine. Serine 372 carries the post-translational modification Phosphoserine. Arginine 395 bears the Asymmetric dimethylarginine mark. Threonine 420 is modified (phosphothreonine). Residues serine 441, serine 542, serine 543, and serine 545 each carry the phosphoserine modification. Threonine 548 and threonine 551 each carry phosphothreonine.

Belongs to the DCP1 family. As to quaternary structure, forms a complex with EDC3, DCP2, DDX6 and EDC4/HEDLS, within this complex directly interacts with EDC3. Part of a cytoplasmic complex containing proteins involved in mRNA decay, including XRN1 and LSM1. Interacts with DCP1B. Interacts with DCP2. Interacts with DDX17 in an RNA-independent manner. Interacts with PNRC2. Interacts with SMAD4. Interacts with UPF1. Interacts with ZC3HAV1. Interacts with ZFP36L1. Interacts with NBDY. Interacts with DHX34; the interaction is RNA-independent. Ubiquitous, with highest expression in the spleen and testis (at protein level).

It is found in the cytoplasm. Its subcellular location is the P-body. The protein localises to the nucleus. It carries out the reaction a 5'-end (N(7)-methyl 5'-triphosphoguanosine)-ribonucleoside in mRNA + H2O = N(7)-methyl-GDP + a 5'-end phospho-ribonucleoside in mRNA + 2 H(+). Its function is as follows. Necessary for the degradation of mRNAs, both in normal mRNA turnover and in nonsense-mediated mRNA decay. Removes the 7-methyl guanine cap structure from mRNA molecules, yielding a 5'-phosphorylated mRNA fragment and 7m-GDP. Contributes to the transactivation of target genes after stimulation by TGFB1. Essential for embryonic development. This Mus musculus (Mouse) protein is mRNA-decapping enzyme 1A (Dcp1a).